The chain runs to 599 residues: Aspartate--tRNA(Asp/Asn) ligase (599 aa).

E174 provides a ligand contact to L-aspartate. An aspartate region spans residues 198-201 (QLFK). R220 contributes to the L-aspartate binding site. ATP-binding positions include 220–222 (RDE) and Q229. L-aspartate is bound at residue H457. E491 serves as a coordination point for ATP. R498 serves as a coordination point for L-aspartate. An ATP-binding site is contributed by 543–546 (GLDR).

Belongs to the class-II aminoacyl-tRNA synthetase family. Type 1 subfamily. In terms of assembly, homodimer.

Its subcellular location is the cytoplasm. It carries out the reaction tRNA(Asx) + L-aspartate + ATP = L-aspartyl-tRNA(Asx) + AMP + diphosphate. Aspartyl-tRNA synthetase with relaxed tRNA specificity since it is able to aspartylate not only its cognate tRNA(Asp) but also tRNA(Asn). Reaction proceeds in two steps: L-aspartate is first activated by ATP to form Asp-AMP and then transferred to the acceptor end of tRNA(Asp/Asn). The polypeptide is Aspartate--tRNA(Asp/Asn) ligase (Paraburkholderia phymatum (strain DSM 17167 / CIP 108236 / LMG 21445 / STM815) (Burkholderia phymatum)).